A 1333-amino-acid chain; its full sequence is DNA-directed RNA polymerase subunit beta' (1333 aa).

Zn(2+)-binding residues include Cys60, Cys62, Cys75, and Cys78. Mg(2+)-binding residues include Asp535, Asp537, and Asp539. The Zn(2+) site is built by Cys901, Cys983, Cys990, and Cys993.

It belongs to the RNA polymerase beta' chain family. In terms of assembly, the RNAP catalytic core consists of 2 alpha, 1 beta, 1 beta' and 1 omega subunit. When a sigma factor is associated with the core the holoenzyme is formed, which can initiate transcription. Mg(2+) is required as a cofactor. The cofactor is Zn(2+).

The catalysed reaction is RNA(n) + a ribonucleoside 5'-triphosphate = RNA(n+1) + diphosphate. Its function is as follows. DNA-dependent RNA polymerase catalyzes the transcription of DNA into RNA using the four ribonucleoside triphosphates as substrates. This Corynebacterium glutamicum (strain R) protein is DNA-directed RNA polymerase subunit beta'.